Here is a 309-residue protein sequence, read N- to C-terminus: MKFKNILVVLNPSNEKQYALARAVRLVEEQKNETKVKITALLSVYDLSYEMSALLSSEERSEMHQQVIEKHRHAVQYYLDKYANPEIELQSHIVWNSNEADAINEEVENNNYDLVVKYTKDEEKLTSLIFTPIDWQLLRKCPIPVLMVRDGDWKHPRRILVAVNVSGEQEYQDEFNQELVETGISLAENLNRGNVHLVAAYPSAPINMAIDLPEFNTSGYENGIRGQHLINMKALRQKFGIDEDHTHVREGFPEEVIPEVAKEIEAELVILGTVGRTGLSAALLGNTAEHVISKLSCNLLGIKPSKKDD.

This sequence belongs to the universal stress protein A family.

It localises to the cytoplasm. Functionally, required for resistance to DNA-damaging agents. This chain is Universal stress protein E homolog (uspE), found in Haemophilus influenzae (strain ATCC 51907 / DSM 11121 / KW20 / Rd).